The primary structure comprises 187 residues: ATP synthase subunit b 2 (187 aa).

A helical transmembrane segment spans residues 32-52 (TTFAAQILWLAIAFGLLYYLM).

This sequence belongs to the ATPase B chain family. In terms of assembly, F-type ATPases have 2 components, F(1) - the catalytic core - and F(0) - the membrane proton channel. F(1) has five subunits: alpha(3), beta(3), gamma(1), delta(1), epsilon(1). F(0) has three main subunits: a(1), b(2) and c(10-14). The alpha and beta chains form an alternating ring which encloses part of the gamma chain. F(1) is attached to F(0) by a central stalk formed by the gamma and epsilon chains, while a peripheral stalk is formed by the delta and b chains.

It is found in the cell inner membrane. Its function is as follows. F(1)F(0) ATP synthase produces ATP from ADP in the presence of a proton or sodium gradient. F-type ATPases consist of two structural domains, F(1) containing the extramembraneous catalytic core and F(0) containing the membrane proton channel, linked together by a central stalk and a peripheral stalk. During catalysis, ATP synthesis in the catalytic domain of F(1) is coupled via a rotary mechanism of the central stalk subunits to proton translocation. Component of the F(0) channel, it forms part of the peripheral stalk, linking F(1) to F(0). The b'-subunit is a diverged and duplicated form of b found in plants and photosynthetic bacteria. The polypeptide is ATP synthase subunit b 2 (atpF2) (Methylobacterium sp. (strain 4-46)).